We begin with the raw amino-acid sequence, 289 residues long: mRNA-capping enzyme small subunit (289 aa).

In terms of assembly, heterodimer of a large and a small subunit.

The protein localises to the virion. It carries out the reaction a 5'-end (5'-triphosphoguanosine)-ribonucleoside in mRNA + S-adenosyl-L-methionine = a 5'-end (N(7)-methyl 5'-triphosphoguanosine)-ribonucleoside in mRNA + S-adenosyl-L-homocysteine. Functionally, catalyzes the last reaction in the mRNA cap formation pathway. The protein is mRNA-capping enzyme small subunit of Fowlpox virus (strain NVSL) (FPV).